The sequence spans 175 residues: MLPPMALPSVSWMLLSCLILLCQVQGEETQKELPSPRISCPKGSKAYGSPCYALFLSPKSWMDADLACQKRPSGKLVSVLSGAEGSFVSSLVRSISNSYSYIWIGLHDPTQGSEPDGDGWEWSSTDVMNYFAWEKNPSTILNPGHCGSLSRSTGFLKWKDYNCDAKLPYVCKFKD.

The signal sequence occupies residues 1–26; the sequence is MLPPMALPSVSWMLLSCLILLCQVQG. Residues 27–37 constitute a propeptide that is removed on maturation; it reads EETQKELPSPR. 3 disulfides stabilise this stretch: C40–C51, C68–C171, and C146–C163. The C-type lectin domain maps to 47 to 172; it reads YGSPCYALFL…CDAKLPYVCK (126 aa). The interval 103-118 is sufficient to activate EXTL3; the sequence is WIGLHDPTQGSEPDGD. H107 lines the Zn(2+) pocket. The EPN motif lies at 114-116; it reads EPD. E121 and H145 together coordinate Zn(2+).

In terms of assembly, forms a hexameric membrane-permeabilizing oligomeric pore on membrane phospholipids. The hexamer is formed by three dimers related by helical symmetry. Forms filaments, filamentation traps pore complexes and limits damage to host cells. Interacts with EXTL3. Post-translationally, proteolytic processing by trypsin removes an inhibitory N-terminal propeptide and is essential for peptidoglycan binding and antibacterial activity. In terms of tissue distribution, predominantly expressed in pancreas, where it may be restricted to exocrine pancreas. Moderate expression levels in testis and weak in heart, kidney and placenta.

It localises to the secreted. Its subcellular location is the cytoplasm. Lipopolysaccharide inhibits pore-forming activity, explaining why is bactericidal for Gram-positive but not Gram-negative bacteria. Functionally, bactericidal C-type lectin which acts exclusively against Gram-positive bacteria and mediates bacterial killing by binding to surface-exposed carbohydrate moieties of peptidoglycan. Restricts bacterial colonization of the intestinal epithelial surface and consequently limits activation of adaptive immune responses by the microbiota. In terms of biological role, acts as a hormone in response to different stimuli like anti-inflammatory signals, such as IL17A, or gut microbiome. Is secreted by different cell types to activate its receptor EXTL3 and induce cell specific signaling pathways. Induced by IL17A in keratinocytes, regulates keratinocyte proliferation and differentiation after skin injury. In parallel, inhibits skin inflammation through the inhibition of inflammatory cytokines such as IL6 and TNF. Induced by IL22 in lung epithelial cells, inhibits cytokine production and regulates allergic airway inflammation. Induced in small intestine by inulin-enriched diet and Lactobacillus gasseri enriched microbiome, plays a role in the improvement of gut barrier function, the regulation of energy balance and glucose levels. Modulates microbiota composition in duodenal contents. Produced by nociceptor in response to endotoxins, prevents endotoxic death by targeting kynurenine pathway in microglia. Has bacteriostatic activity. Its function is as follows. Has bactericidal activity against L.monocytogenes and methicillin-resistant S.aureus. The polypeptide is Regenerating islet-derived protein 3-gamma (Homo sapiens (Human)).